The primary structure comprises 94 residues: Histone-like DNA-binding protein (94 aa).

The protein belongs to the bacterial histone-like protein family.

This Rickettsia bellii (strain RML369-C) protein is Histone-like DNA-binding protein.